Consider the following 229-residue polypeptide: Potassium/proton antiporter CemA (229 aa).

4 helical membrane-spanning segments follow: residues 7–27 (FTPL…SFSF), 114–134 (IISF…LVVL), 154–174 (ILLL…ELMI), and 189–209 (IISG…KYWI).

It belongs to the CemA family.

It localises to the plastid. The protein resides in the chloroplast inner membrane. The catalysed reaction is K(+)(in) + H(+)(out) = K(+)(out) + H(+)(in). In terms of biological role, contributes to K(+)/H(+) antiport activity by supporting proton efflux to control proton extrusion and homeostasis in chloroplasts in a light-dependent manner to modulate photosynthesis. Prevents excessive induction of non-photochemical quenching (NPQ) under continuous-light conditions. Indirectly promotes efficient inorganic carbon uptake into chloroplasts. This chain is Potassium/proton antiporter CemA, found in Nandina domestica (Heavenly bamboo).